Here is a 673-residue protein sequence, read N- to C-terminus: Putative transcription factor tau subunit sfc9 (673 aa).

May be a component of the TFIIIC complex.

It is found in the nucleus. In Schizosaccharomyces pombe (strain 972 / ATCC 24843) (Fission yeast), this protein is Putative transcription factor tau subunit sfc9.